A 269-amino-acid chain; its full sequence is Autophagy-related protein 5 (269 aa).

Lys-102 participates in a covalent cross-link: Glycyl lysine isopeptide (Lys-Gly) (interchain with G-Cter in ATG12).

It belongs to the ATG5 family. As to quaternary structure, conjugated with ATG12. The ATG5-ATG12 conjugate forms a complex with several units of ATG16. The ATG12-ATG5 conjugate also associates with ATG3. Post-translationally, conjugated to ATG12; which is essential for autophagy. Conjugation with ATG12 involves ATG7 as an E1-like activating enzyme and ATG10 as an E2-like conjugating enzyme.

The protein resides in the preautophagosomal structure membrane. Its function is as follows. Involved in cytoplasm to vacuole transport (Cvt) and autophagic vesicle formation. Autophagy is essential for maintenance of amino acid levels and protein synthesis under nitrogen starvation. Required for selective autophagic degradation of the nucleus (nucleophagy). Also required for mitophagy, which eliminates defective or superfluous mitochondria in order to fulfill cellular energy requirements and prevent excess ROS production. Conjugation with ATG12, through a ubiquitin-like conjugating system involving ATG7 as an E1-like activating enzyme and ATG10 as an E2-like conjugating enzyme, is essential for its function. The ATG12-ATG5 conjugate acts as an E3-like enzyme which is required for lipidation of ATG8 and ATG8 association to the vesicle membranes. ATG12-ATG5 rearranges the ATG3 catalytic center and enhances its E2 activity. Required for proper vegetative growth, asexual/sexual reproduction, but, unlike several plant and animal pathogenic fungi, where ATG5 is required for infection, in B.bassiana it is dispensable for pathogenesis. This chain is Autophagy-related protein 5, found in Beauveria bassiana (strain ARSEF 2860) (White muscardine disease fungus).